The chain runs to 195 residues: Large ribosomal subunit protein uL18 (195 aa).

The protein belongs to the universal ribosomal protein uL18 family. As to quaternary structure, part of the 50S ribosomal subunit. Contacts the 5S and 23S rRNAs.

This is one of the proteins that bind and probably mediate the attachment of the 5S RNA into the large ribosomal subunit, where it forms part of the central protuberance. The chain is Large ribosomal subunit protein uL18 from Methanococcus vannielii.